The sequence spans 112 residues: Integration host factor subunit alpha (112 aa).

Belongs to the bacterial histone-like protein family. In terms of assembly, heterodimer of an alpha and a beta chain.

In terms of biological role, this protein is one of the two subunits of integration host factor, a specific DNA-binding protein that functions in genetic recombination as well as in transcriptional and translational control. This is Integration host factor subunit alpha from Sinorhizobium medicae (strain WSM419) (Ensifer medicae).